The primary structure comprises 585 residues: Dihydroxy-acid dehydratase, mitochondrial (585 aa).

The transit peptide at 1–20 directs the protein to the mitochondrion; it reads MGLLTKVATSRQFSTTRCVA. Position 70 (C70) interacts with [2Fe-2S] cluster. D102 is a binding site for Mg(2+). C143 lines the [2Fe-2S] cluster pocket. Position 144 (D144) interacts with Mg(2+). C221 contributes to the [2Fe-2S] cluster binding site. E474 is a Mg(2+) binding site. S500 (proton acceptor) is an active-site residue.

Belongs to the IlvD/Edd family. [2Fe-2S] cluster is required as a cofactor. Mg(2+) serves as cofactor.

It is found in the mitochondrion. It catalyses the reaction (2R)-2,3-dihydroxy-3-methylbutanoate = 3-methyl-2-oxobutanoate + H2O. It carries out the reaction (2R,3R)-2,3-dihydroxy-3-methylpentanoate = (S)-3-methyl-2-oxopentanoate + H2O. It participates in amino-acid biosynthesis; L-isoleucine biosynthesis; L-isoleucine from 2-oxobutanoate: step 3/4. The protein operates within amino-acid biosynthesis; L-valine biosynthesis; L-valine from pyruvate: step 3/4. With respect to regulation, catalytic activity is inactivated under iron-limiting conditions. Its function is as follows. Dihydroxyacid dehydratase that catalyzes the third step in the common pathway leading to biosynthesis of branched-chain amino acids. Catalyzes the dehydration of (2R,3R)-2,3-dihydroxy-3-methylpentanoate (2,3-dihydroxy-3-methylvalerate) into 2-oxo-3-methylpentanoate (2-oxo-3-methylvalerate) and of (2R)-2,3-dihydroxy-3-methylbutanoate (2,3-dihydroxyisovalerate) into 2-oxo-3-methylbutanoate (2-oxoisovalerate), the penultimate precursor to L-isoleucine and L-valine, respectively. Required for the synthesis of alpha-isopropylmalate which modulates the activity of LEU3 and subsequently regulates the expression of LEU1. In Saccharomyces cerevisiae (strain ATCC 204508 / S288c) (Baker's yeast), this protein is Dihydroxy-acid dehydratase, mitochondrial.